The chain runs to 156 residues: Small ribosomal subunit protein uS7 (156 aa).

This sequence belongs to the universal ribosomal protein uS7 family. As to quaternary structure, part of the 30S ribosomal subunit. Contacts proteins S9 and S11.

Functionally, one of the primary rRNA binding proteins, it binds directly to 16S rRNA where it nucleates assembly of the head domain of the 30S subunit. Is located at the subunit interface close to the decoding center, probably blocks exit of the E-site tRNA. This Geobacter sp. (strain M21) protein is Small ribosomal subunit protein uS7.